The primary structure comprises 362 residues: Ferrochelatase (362 aa).

Residues histidine 228 and glutamate 309 each coordinate Fe cation.

Belongs to the ferrochelatase family.

It is found in the cytoplasm. The enzyme catalyses heme b + 2 H(+) = protoporphyrin IX + Fe(2+). The protein operates within porphyrin-containing compound metabolism; protoheme biosynthesis; protoheme from protoporphyrin-IX: step 1/1. Catalyzes the ferrous insertion into protoporphyrin IX. The polypeptide is Ferrochelatase (Bordetella pertussis (strain Tohama I / ATCC BAA-589 / NCTC 13251)).